A 483-amino-acid polypeptide reads, in one-letter code: Altronate oxidoreductase (483 aa).

18 to 29 (IIQFGEGNFLRA) serves as a coordination point for NAD(+).

It belongs to the mannitol dehydrogenase family. UxaB subfamily.

It catalyses the reaction D-altronate + NAD(+) = keto-D-tagaturonate + NADH + H(+). It participates in carbohydrate metabolism; pentose and glucuronate interconversion. This is Altronate oxidoreductase from Enterobacter sp. (strain 638).